Here is an 84-residue protein sequence, read N- to C-terminus: Sulfur carrier protein TusA (84 aa).

Catalysis depends on Cys-19, which acts as the Cysteine persulfide intermediate.

This sequence belongs to the sulfur carrier protein TusA family. Interacts with IscS.

The protein resides in the cytoplasm. Its pathway is tRNA modification. In terms of biological role, sulfur carrier protein involved in sulfur trafficking in the cell. Part of a sulfur-relay system required for 2-thiolation during synthesis of 2-thiouridine of the modified wobble base 5-methylaminomethyl-2-thiouridine (mnm(5)s(2)U) in tRNA. Interacts with IscS and stimulates its cysteine desulfurase activity. Accepts an activated sulfur from IscS, which is then transferred to TusD, and thus determines the direction of sulfur flow from IscS to 2-thiouridine formation. Also appears to be involved in sulfur transfer for the biosynthesis of molybdopterin. This Proteus mirabilis (strain HI4320) protein is Sulfur carrier protein TusA.